Consider the following 354-residue polypeptide: Guanine nucleotide-binding protein G(o) subunit alpha (354 aa).

Gly-2 carries N-myristoyl glycine lipidation. Residue Cys-3 is the site of S-palmitoyl cysteine attachment. Residues 32 to 354 (KDVKLLLLGA…ANNLRGCGLY (323 aa)) enclose the G-alpha domain. The interval 35–48 (KLLLLGAGESGKST) is G1 motif. GTP-binding residues include Glu-43, Lys-46, Ser-47, Thr-48, Ser-152, Leu-176, Arg-177, Thr-178, and Arg-179. Ser-47 contacts Mg(2+). Positions 174–182 (DILRTRVKT) are G2 motif. Thr-182 is a binding site for Mg(2+). Positions 197–206 (FRLFDVGGQR) are G3 motif. Gln-205 carries the post-translational modification 5-glutamyl histamine. The tract at residues 266 to 273 (ILFLNKKD) is G4 motif. GTP-binding residues include Asn-270, Asp-273, and Cys-325. Residues 324-329 (TCATDT) form a G5 motif region. Residue Cys-351 is the site of S-palmitoyl cysteine attachment.

The protein belongs to the G-alpha family. G(i/o/t/z) subfamily. In terms of assembly, g proteins are composed of 3 units; alpha, beta and gamma. The alpha chain contains the guanine nucleotide binding site. Forms a complex with GNB1 and GNG3. Interacts with RGS14. Interacts with RGS16. Interacts with RGS19. Interacts (when palmitoylated) with ADGRG3. Post-translationally, histaminylated at Gln-205 residues by TGM2.

The protein localises to the cell membrane. Its subcellular location is the membrane. The enzyme catalyses GTP + H2O = GDP + phosphate + H(+). The GTPase activity is promoted by GTPAse activators, such as RGS14, RGS16 and RGS19. Guanine nucleotide-binding proteins (G proteins) function as transducers downstream of G protein-coupled receptors (GPCRs) in numerous signaling cascades. The alpha chain contains the guanine nucleotide binding site and alternates between an active, GTP-bound state and an inactive, GDP-bound state. Signaling by an activated GPCR promotes GDP release and GTP binding. The alpha subunit has a low GTPase activity that converts bound GTP to GDP, thereby terminating the signal. Both GDP release and GTP hydrolysis are modulated by numerous regulatory proteins. Signaling is mediated via effector proteins, such as adenylate cyclase. Inhibits adenylate cyclase activity, leading to decreased intracellular cAMP levels. The chain is Guanine nucleotide-binding protein G(o) subunit alpha (Gnao1) from Mus musculus (Mouse).